The sequence spans 151 residues: Large ribosomal subunit protein uL15 (151 aa).

The tract at residues 1-62 (MVKLNELFPK…GGQMPLYRRV (62 aa)) is disordered. Residues 11-20 (HGSRKAKRRI) are compositionally biased toward basic residues.

This sequence belongs to the universal ribosomal protein uL15 family. Part of the 50S ribosomal subunit.

In terms of biological role, binds to the 23S rRNA. In Elusimicrobium minutum (strain Pei191), this protein is Large ribosomal subunit protein uL15.